We begin with the raw amino-acid sequence, 240 residues long: UDP-2,3-diacylglucosamine hydrolase (240 aa).

Aspartate 8, histidine 10, aspartate 41, asparagine 78, and histidine 113 together coordinate Mn(2+). A substrate-binding site is contributed by 78–79 (NR). Aspartate 121, serine 159, asparagine 163, lysine 166, and histidine 194 together coordinate substrate. Mn(2+)-binding residues include histidine 194 and histidine 196.

This sequence belongs to the LpxH family. The cofactor is Mn(2+).

It localises to the cell inner membrane. The enzyme catalyses UDP-2-N,3-O-bis[(3R)-3-hydroxytetradecanoyl]-alpha-D-glucosamine + H2O = 2-N,3-O-bis[(3R)-3-hydroxytetradecanoyl]-alpha-D-glucosaminyl 1-phosphate + UMP + 2 H(+). Its pathway is glycolipid biosynthesis; lipid IV(A) biosynthesis; lipid IV(A) from (3R)-3-hydroxytetradecanoyl-[acyl-carrier-protein] and UDP-N-acetyl-alpha-D-glucosamine: step 4/6. Its function is as follows. Hydrolyzes the pyrophosphate bond of UDP-2,3-diacylglucosamine to yield 2,3-diacylglucosamine 1-phosphate (lipid X) and UMP by catalyzing the attack of water at the alpha-P atom. Involved in the biosynthesis of lipid A, a phosphorylated glycolipid that anchors the lipopolysaccharide to the outer membrane of the cell. This chain is UDP-2,3-diacylglucosamine hydrolase, found in Shewanella baltica (strain OS185).